The sequence spans 132 residues: Small ribosomal subunit protein uS8 (132 aa).

This sequence belongs to the universal ribosomal protein uS8 family. As to quaternary structure, part of the 30S ribosomal subunit. Contacts proteins S5 and S12.

One of the primary rRNA binding proteins, it binds directly to 16S rRNA central domain where it helps coordinate assembly of the platform of the 30S subunit. In Staphylococcus epidermidis (strain ATCC 35984 / DSM 28319 / BCRC 17069 / CCUG 31568 / BM 3577 / RP62A), this protein is Small ribosomal subunit protein uS8.